Here is a 322-residue protein sequence, read N- to C-terminus: Acetyl-coenzyme A carboxylase carboxyl transferase subunit alpha (322 aa).

The CoA carboxyltransferase C-terminal domain occupies 30–293 (ALDISAEIAR…KQTLQESLRK (264 aa)).

Belongs to the AccA family. As to quaternary structure, acetyl-CoA carboxylase is a heterohexamer composed of biotin carboxyl carrier protein (AccB), biotin carboxylase (AccC) and two subunits each of ACCase subunit alpha (AccA) and ACCase subunit beta (AccD).

The protein resides in the cytoplasm. It carries out the reaction N(6)-carboxybiotinyl-L-lysyl-[protein] + acetyl-CoA = N(6)-biotinyl-L-lysyl-[protein] + malonyl-CoA. It functions in the pathway lipid metabolism; malonyl-CoA biosynthesis; malonyl-CoA from acetyl-CoA: step 1/1. In terms of biological role, component of the acetyl coenzyme A carboxylase (ACC) complex. First, biotin carboxylase catalyzes the carboxylation of biotin on its carrier protein (BCCP) and then the CO(2) group is transferred by the carboxyltransferase to acetyl-CoA to form malonyl-CoA. The protein is Acetyl-coenzyme A carboxylase carboxyl transferase subunit alpha of Nitrosomonas europaea (strain ATCC 19718 / CIP 103999 / KCTC 2705 / NBRC 14298).